The chain runs to 132 residues: UPF0102 protein Acel_1550 (132 aa).

The protein belongs to the UPF0102 family.

This chain is UPF0102 protein Acel_1550, found in Acidothermus cellulolyticus (strain ATCC 43068 / DSM 8971 / 11B).